The sequence spans 497 residues: Protein root UVB sensitive 6 (497 aa).

This sequence belongs to the RUS1 family.

Required for normal embryo development. The sequence is that of Protein root UVB sensitive 6 from Arabidopsis thaliana (Mouse-ear cress).